Consider the following 96-residue polypeptide: Small ribosomal subunit protein bS6 (96 aa).

Belongs to the bacterial ribosomal protein bS6 family.

In terms of biological role, binds together with bS18 to 16S ribosomal RNA. The chain is Small ribosomal subunit protein bS6 from Streptococcus gordonii (strain Challis / ATCC 35105 / BCRC 15272 / CH1 / DL1 / V288).